A 203-amino-acid polypeptide reads, in one-letter code: RNA annealing protein YRA2 (203 aa).

Met-1 is subject to N-acetylmethionine. Disordered stretches follow at residues 1–60 (MDKA…REEP) and 134–203 (EIYQ…YMKG). The segment covering 11-20 (NSHTDSSSNH) has biased composition (polar residues). Basic and acidic residues predominate over residues 47–60 (SRSKDRLYREREEP). Residues 64–138 (KRIRISKIPL…AKIEVEIYQP (75 aa)) enclose the RRM domain. 2 stretches are compositionally biased toward basic residues: residues 139–153 (QRKH…RRKQ) and 163–180 (PGSH…KNKG).

It belongs to the YRA1 family. Associates with mRNPs. Interacts with YRA1.

The protein resides in the nucleus. Involved in export of poly(A) mRNAs from the nucleus. Recruited to the coding sequences as well as poly-A sites of active genes. The sequence is that of RNA annealing protein YRA2 (YRA2) from Saccharomyces cerevisiae (strain RM11-1a) (Baker's yeast).